A 375-amino-acid polypeptide reads, in one-letter code: Chaperone protein DnaJ (375 aa).

Residues Gly5 to Gly70 enclose the J domain. The CR-type zinc-finger motif lies at Gly142–Arg220. The Zn(2+) site is built by Cys155, Cys158, Cys172, Cys175, Cys194, Cys197, Cys208, and Cys211. CXXCXGXG motif repeat units lie at residues Cys155–Gly162, Cys172–Gly179, Cys194–Gly201, and Cys208–Gly215.

This sequence belongs to the DnaJ family. In terms of assembly, homodimer. Zn(2+) is required as a cofactor.

It localises to the cytoplasm. Participates actively in the response to hyperosmotic and heat shock by preventing the aggregation of stress-denatured proteins and by disaggregating proteins, also in an autonomous, DnaK-independent fashion. Unfolded proteins bind initially to DnaJ; upon interaction with the DnaJ-bound protein, DnaK hydrolyzes its bound ATP, resulting in the formation of a stable complex. GrpE releases ADP from DnaK; ATP binding to DnaK triggers the release of the substrate protein, thus completing the reaction cycle. Several rounds of ATP-dependent interactions between DnaJ, DnaK and GrpE are required for fully efficient folding. Also involved, together with DnaK and GrpE, in the DNA replication of plasmids through activation of initiation proteins. In Leptospira biflexa serovar Patoc (strain Patoc 1 / Ames), this protein is Chaperone protein DnaJ.